Here is a 142-residue protein sequence, read N- to C-terminus: MADTFEFEIVTPDKLVVKDVAEQMQIPGKNGYLGILPGHAPLITELSIGEISYTLRGETKYLALAWGFAEVLPDKVTILAEAAERPEEIDVARAQEAKKRAEQRLQTSGPELDYQRALNAVKRAEVRLQVASHATSKAAVGH.

It belongs to the ATPase epsilon chain family. As to quaternary structure, F-type ATPases have 2 components, CF(1) - the catalytic core - and CF(0) - the membrane proton channel. CF(1) has five subunits: alpha(3), beta(3), gamma(1), delta(1), epsilon(1). CF(0) has three main subunits: a, b and c.

It localises to the cell inner membrane. Functionally, produces ATP from ADP in the presence of a proton gradient across the membrane. This is ATP synthase epsilon chain from Koribacter versatilis (strain Ellin345).